The following is a 680-amino-acid chain: Oligopeptidase A (680 aa).

Zn(2+) is bound at residue H469. The active site involves E470. The Zn(2+) site is built by H473 and H476.

Belongs to the peptidase M3 family. It depends on Zn(2+) as a cofactor.

It carries out the reaction Hydrolysis of oligopeptides, with broad specificity. Gly or Ala commonly occur as P1 or P1' residues, but more distant residues are also important, as is shown by the fact that Z-Gly-Pro-Gly-|-Gly-Pro-Ala is cleaved, but not Z-(Gly)(5).. Its function is as follows. May play a specific role in the degradation of signal peptides after they are released from precursor forms of secreted proteins. Can cleave N-acetyl-L-Ala(4). The polypeptide is Oligopeptidase A (prlC) (Escherichia coli (strain K12)).